A 235-amino-acid chain; its full sequence is Mitochondrial inner membrane protease ATP23 homolog (235 aa).

His-114 contributes to the a divalent metal cation binding site. Residue Glu-115 is part of the active site. His-118 is a binding site for a divalent metal cation.

The protein belongs to the peptidase M76 family.

The chain is Mitochondrial inner membrane protease ATP23 homolog (atp23) from Xenopus laevis (African clawed frog).